A 693-amino-acid polypeptide reads, in one-letter code: C6 finger domain transcription factor nscR (693 aa).

Positions 17–43 form a DNA-binding region, zn(2)-C6 fungal-type; the sequence is CELCRERKVKCDKLDPCTNCSSAGVIC. The disordered stretch occupies residues 589 to 608; it reads AANTLSVPHTPPSRSSITSS.

The protein localises to the nucleus. Functionally, transcription factor that specifically regulates the neosartoricin B biosynthesis gene cluster. The polypeptide is C6 finger domain transcription factor nscR (Trichophyton rubrum (strain ATCC MYA-4607 / CBS 118892) (Athlete's foot fungus)).